Here is a 527-residue protein sequence, read N- to C-terminus: TnpB-like protein R854 (527 aa).

Residues 21 to 36 show a composition bias toward basic residues; sequence GSKTKKKVFVKKKPPA. The tract at residues 21-50 is disordered; sequence GSKTKKKVFVKKKPPAKKPPDKKPLKKTTK. Zn(2+) is bound by residues cysteine 481, cysteine 484, cysteine 498, and cysteine 501.

This sequence in the central section; belongs to the transposase 2 family. The protein in the C-terminal section; belongs to the transposase 35 family.

The sequence is that of TnpB-like protein R854 from Acanthamoeba polyphaga mimivirus (APMV).